The chain runs to 480 residues: Glutathione reductase (480 aa).

S31 and G32 together coordinate FAD. S31 contributes to the glutathione binding site. A glutathione-binding site is contributed by R38. FAD-binding residues include E51, T58, C59, and K67. The cysteines at positions 59 and 64 are disulfide-linked. Y121 contributes to the glutathione binding site. A137 contacts FAD. 4 residues coordinate NADP(+): I206, E209, R226, and G291. D331 lines the FAD pocket. An NADP(+)-binding site is contributed by E337. T339 contacts FAD. R347 is a binding site for glutathione. V372 serves as a coordination point for NADP(+). Glutathione is bound at residue K422. H469 provides a ligand contact to FAD. The Proton acceptor role is filled by H469.

The protein belongs to the class-I pyridine nucleotide-disulfide oxidoreductase family. As to quaternary structure, homodimer. FAD serves as cofactor.

Its subcellular location is the cytoplasm. It localises to the mitochondrion. The catalysed reaction is 2 glutathione + NADP(+) = glutathione disulfide + NADPH + H(+). Its function is as follows. Catalyzes the reduction of glutathione disulfide (GSSG) to reduced glutathione (GSH). Constitutes the major mechanism to maintain a high GSH:GSSG ratio in the cytosol. The protein is Glutathione reductase (GLR1) of Eremothecium gossypii (strain ATCC 10895 / CBS 109.51 / FGSC 9923 / NRRL Y-1056) (Yeast).